Consider the following 85-residue polypeptide: Large ribosomal subunit protein bL27 (85 aa).

A disordered region spans residues 1-22 (MAHKKGASSTRNGRDSNAQRLG). The segment covering 7–19 (ASSTRNGRDSNAQ) has biased composition (polar residues).

Belongs to the bacterial ribosomal protein bL27 family.

The sequence is that of Large ribosomal subunit protein bL27 (rpmA) from Streptomyces griseus.